A 398-amino-acid chain; its full sequence is ATP-dependent RNA helicase eIF4A (398 aa).

Residues 25-53 (DSFDAMNLRAELLRGVYAYGFERPSAIQQ) carry the Q motif motif. The Helicase ATP-binding domain maps to 56-226 (IMPVIKGSDV…TKFMRDPVRI (171 aa)). 69-76 (AQSGTGKT) contributes to the ATP binding site. A DEAD box motif is present at residues 174 to 177 (DEAD). The Helicase C-terminal domain maps to 237–398 (GIKQFYIAVE…EMPMNVADLI (162 aa)).

Belongs to the DEAD box helicase family. eIF4A subfamily. In terms of assembly, component of the eIF4F complex, which composition varies with external and internal environmental conditions. It is composed of at least eIF4A, eIF4E and eIF4G.

It is found in the cytoplasm. It carries out the reaction ATP + H2O = ADP + phosphate + H(+). In terms of biological role, ATP-dependent RNA helicase which is a subunit of the eIF4F complex involved in cap recognition and is required for mRNA binding to ribosome. In the current model of translation initiation, eIF4A unwinds RNA secondary structures in the 5'-UTR of mRNAs which is necessary to allow efficient binding of the small ribosomal subunit, and subsequent scanning for the initiator codon. This is ATP-dependent RNA helicase eIF4A (TIF1) from Coccidioides immitis (strain RS) (Valley fever fungus).